We begin with the raw amino-acid sequence, 60 residues long: Metallothionein (60 aa).

Met1 is modified (N-acetylmethionine). Residues 1 to 28 form a beta region; it reads MDPCECSKTGTCNCGGSCTCKNCSCTTC. Residues Cys4, Cys6, Cys12, Cys14, Cys18, Cys20, Cys23, Cys25, Cys28, Cys32, Cys33, Cys35, Cys36, Cys40, Cys43, Cys47, Cys49, Cys54, Cys58, and Cys59 each coordinate a divalent metal cation. Residues 29 to 60 form an alpha region; sequence NKSCCPCCPSGCPKCASGCVCKGKTCDTSCCQ.

It belongs to the metallothionein superfamily. Type 1 family.

In terms of biological role, metallothioneins have a high content of cysteine residues that bind various heavy metals. This Pleuronectes platessa (European plaice) protein is Metallothionein (mt).